A 539-amino-acid polypeptide reads, in one-letter code: Chaperonin GroEL 2 (539 aa).

Residues threonine 29–proline 32, aspartate 86–threonine 90, glycine 413, asparagine 477–alanine 479, and aspartate 493 each bind ATP. The tract at residues valine 519–histidine 539 is disordered.

It belongs to the chaperonin (HSP60) family. In terms of assembly, forms a cylinder of 14 subunits composed of two heptameric rings stacked back-to-back. Interacts with the co-chaperonin GroES.

The protein resides in the cytoplasm. The catalysed reaction is ATP + H2O + a folded polypeptide = ADP + phosphate + an unfolded polypeptide.. Its function is as follows. Together with its co-chaperonin GroES, plays an essential role in assisting protein folding. The GroEL-GroES system forms a nano-cage that allows encapsulation of the non-native substrate proteins and provides a physical environment optimized to promote and accelerate protein folding. This chain is Chaperonin GroEL 2, found in Saccharopolyspora erythraea (strain ATCC 11635 / DSM 40517 / JCM 4748 / NBRC 13426 / NCIMB 8594 / NRRL 2338).